A 346-amino-acid polypeptide reads, in one-letter code: Low-temperature-induced cysteine proteinase (346 aa).

Positions 1 to 17 (KLSKNKSDRYLPKVGDS) are cleaved as a propeptide — activation peptide. 5 disulfide bridges follow: Cys39–Cys81, Cys73–Cys114, Cys172–Cys223, Cys256–Cys268, and Cys262–Cys283. The active site involves Cys42. Catalysis depends on residues His178 and Asn198. Asn215 carries an N-linked (GlcNAc...) asparagine glycan. Residues 238–346 (NPPKPAPSPP…FGNGGKKSSS (109 aa)) constitute a propeptide, removed in mature form.

The protein belongs to the peptidase C1 family.

This Solanum lycopersicum (Tomato) protein is Low-temperature-induced cysteine proteinase.